Consider the following 283-residue polypeptide: Pyridoxine/pyridoxal/pyridoxamine kinase (283 aa).

2 residues coordinate substrate: S23 and H59. Position 125 (D125) interacts with ATP. Mg(2+) is bound at residue Y136. ATP is bound by residues T157, E162, T195, 222–225, and T232; that span reads HAHV. Position 162 (E162) interacts with Mg(2+). D234 contributes to the substrate binding site.

Belongs to the pyridoxine kinase family. PdxK subfamily. Homodimer. It depends on Mg(2+) as a cofactor.

It carries out the reaction pyridoxal + ATP = pyridoxal 5'-phosphate + ADP + H(+). The enzyme catalyses pyridoxine + ATP = pyridoxine 5'-phosphate + ADP + H(+). The catalysed reaction is pyridoxamine + ATP = pyridoxamine 5'-phosphate + ADP + H(+). It functions in the pathway cofactor metabolism; pyridoxal 5'-phosphate salvage; pyridoxal 5'-phosphate from pyridoxal: step 1/1. It participates in cofactor metabolism; pyridoxal 5'-phosphate salvage; pyridoxine 5'-phosphate from pyridoxine: step 1/1. The protein operates within cofactor metabolism; pyridoxal 5'-phosphate salvage; pyridoxamine 5'-phosphate from pyridoxamine: step 1/1. Its function is as follows. B6-vitamer kinase involved in the salvage pathway of pyridoxal 5'-phosphate (PLP). Catalyzes the phosphorylation of pyridoxine (PN), pyridoxal (PL), and pyridoxamine (PM), forming their respective 5'-phosphorylated esters, i.e. PNP, PLP and PMP. This chain is Pyridoxine/pyridoxal/pyridoxamine kinase, found in Bordetella pertussis (strain Tohama I / ATCC BAA-589 / NCTC 13251).